The following is a 657-amino-acid chain: Receptor-type tyrosine-protein phosphatase R (657 aa).

The first 21 residues, 1–21, serve as a signal peptide directing secretion; sequence MRRAVCFPALCLLLNLHAAGC. The Extracellular portion of the chain corresponds to 22 to 227; the sequence is FSGNNDHFLA…EADKIWSKEG (206 aa). Serine 23 carries O-linked (Xyl...) (chondroitin sulfate) serine glycosylation. A glycan (N-linked (GlcNAc...) asparagine) is linked at asparagine 129. A helical transmembrane segment spans residues 228–248; it reads FYAVVIFLSIFVIIVTCLMIL. Residues 249–657 lie on the Cytoplasmic side of the membrane; sequence YRLKERFQLS…ESRLSAETVQ (409 aa). Serine 272 carries the phosphoserine modification. Serine 339 carries the post-translational modification Phosphoserine; by PKA. The Tyrosine-protein phosphatase domain occupies 393–647; it reads LQSEFMEIPM…EFVHHALCLY (255 aa). Residues aspartate 554, 588–594, and glutamine 632 contribute to the substrate site; that span reads CSAGIGR. The Phosphocysteine intermediate role is filled by cysteine 588.

The protein belongs to the protein-tyrosine phosphatase family. Receptor class 7 subfamily. Interacts with MAPKs. Detected in cerebrospinal fluid (at protein level). Expressed in brain, placenta, small intestine, stomach, uterus and weakly in the prostate. Isoform alpha has been observed only in the brain. Isoform gamma is expressed in brain, placenta and uterus. Isoform delta is expressed in brain, kidney, placenta, prostate, small intestine and uterus.

It is found in the secreted. The protein localises to the cell membrane. Its subcellular location is the cytoplasm. The protein resides in the perinuclear region. It catalyses the reaction O-phospho-L-tyrosyl-[protein] + H2O = L-tyrosyl-[protein] + phosphate. Its function is as follows. Sequesters mitogen-activated protein kinases (MAPKs) such as MAPK1, MAPK3 and MAPK14 in the cytoplasm in an inactive form. The MAPKs bind to a dephosphorylated kinase interacting motif, phosphorylation of which by the protein kinase A complex releases the MAPKs for activation and translocation into the nucleus. The protein is Receptor-type tyrosine-protein phosphatase R (PTPRR) of Homo sapiens (Human).